The following is a 504-amino-acid chain: Histidine ammonia-lyase (504 aa).

The segment at residues 142–144 is a cross-link (5-imidazolinone (Ala-Gly)); that stretch reads ASG. Ser-143 is modified (2,3-didehydroalanine (Ser)).

Belongs to the PAL/histidase family. In terms of processing, contains an active site 4-methylidene-imidazol-5-one (MIO), which is formed autocatalytically by cyclization and dehydration of residues Ala-Ser-Gly.

It is found in the cytoplasm. The catalysed reaction is L-histidine = trans-urocanate + NH4(+). The protein operates within amino-acid degradation; L-histidine degradation into L-glutamate; N-formimidoyl-L-glutamate from L-histidine: step 1/3. In Staphylococcus aureus (strain bovine RF122 / ET3-1), this protein is Histidine ammonia-lyase.